The following is a 346-amino-acid chain: Holliday junction branch migration complex subunit RuvB (346 aa).

The large ATPase domain (RuvB-L) stretch occupies residues 1–188 (MSDEYGPPER…FGIVQRLAYY (188 aa)). ATP contacts are provided by residues Leu-27, Arg-28, Gly-69, Lys-72, Thr-73, Thr-74, 135-137 (EDF), Arg-178, Tyr-188, and Arg-225. Residue Thr-73 coordinates Mg(2+). The tract at residues 189-259 (PVDELTRIVQ…VAADAMELLD (71 aa)) is small ATPAse domain (RuvB-S). The tract at residues 262–346 (RNGLDEQDRR…QAAGSGDLFG (85 aa)) is head domain (RuvB-H). DNA-binding residues include Arg-298, Arg-317, and Arg-322.

This sequence belongs to the RuvB family. Homohexamer. Forms an RuvA(8)-RuvB(12)-Holliday junction (HJ) complex. HJ DNA is sandwiched between 2 RuvA tetramers; dsDNA enters through RuvA and exits via RuvB. An RuvB hexamer assembles on each DNA strand where it exits the tetramer. Each RuvB hexamer is contacted by two RuvA subunits (via domain III) on 2 adjacent RuvB subunits; this complex drives branch migration. In the full resolvosome a probable DNA-RuvA(4)-RuvB(12)-RuvC(2) complex forms which resolves the HJ.

It is found in the cytoplasm. It carries out the reaction ATP + H2O = ADP + phosphate + H(+). Functionally, the RuvA-RuvB-RuvC complex processes Holliday junction (HJ) DNA during genetic recombination and DNA repair, while the RuvA-RuvB complex plays an important role in the rescue of blocked DNA replication forks via replication fork reversal (RFR). RuvA specifically binds to HJ cruciform DNA, conferring on it an open structure. The RuvB hexamer acts as an ATP-dependent pump, pulling dsDNA into and through the RuvAB complex. RuvB forms 2 homohexamers on either side of HJ DNA bound by 1 or 2 RuvA tetramers; 4 subunits per hexamer contact DNA at a time. Coordinated motions by a converter formed by DNA-disengaged RuvB subunits stimulates ATP hydrolysis and nucleotide exchange. Immobilization of the converter enables RuvB to convert the ATP-contained energy into a lever motion, pulling 2 nucleotides of DNA out of the RuvA tetramer per ATP hydrolyzed, thus driving DNA branch migration. The RuvB motors rotate together with the DNA substrate, which together with the progressing nucleotide cycle form the mechanistic basis for DNA recombination by continuous HJ branch migration. Branch migration allows RuvC to scan DNA until it finds its consensus sequence, where it cleaves and resolves cruciform DNA. This is Holliday junction branch migration complex subunit RuvB from Halorhodospira halophila (strain DSM 244 / SL1) (Ectothiorhodospira halophila (strain DSM 244 / SL1)).